The following is a 266-amino-acid chain: Glucosamine-6-phosphate deaminase (266 aa).

The active-site Proton acceptor; for enolization step is Asp72. The active-site For ring-opening step is the Asp141. The Proton acceptor; for ring-opening step role is filled by His143. Glu148 acts as the For ring-opening step in catalysis.

This sequence belongs to the glucosamine/galactosamine-6-phosphate isomerase family. NagB subfamily. Homohexamer; trimer of disulfide-linked dimers.

It catalyses the reaction alpha-D-glucosamine 6-phosphate + H2O = beta-D-fructose 6-phosphate + NH4(+). The protein operates within amino-sugar metabolism; N-acetylneuraminate degradation; D-fructose 6-phosphate from N-acetylneuraminate: step 5/5. Its activity is regulated as follows. Allosterically activated by N-acetylglucosamine 6-phosphate (GlcNAc6P). Catalyzes the reversible isomerization-deamination of glucosamine 6-phosphate (GlcN6P) to form fructose 6-phosphate (Fru6P) and ammonium ion. The protein is Glucosamine-6-phosphate deaminase of Vibrio parahaemolyticus serotype O3:K6 (strain RIMD 2210633).